Consider the following 645-residue polypeptide: 1,4-alpha-glucan branching enzyme GlgB (645 aa).

Aspartate 309 functions as the Nucleophile in the catalytic mechanism. Glutamate 352 functions as the Proton donor in the catalytic mechanism. The tract at residues 619 to 645 (VKTRKGSKKQDGSKTKVRSNVTSRGKR) is disordered. Over residues 636–645 (RSNVTSRGKR) the composition is skewed to polar residues.

It belongs to the glycosyl hydrolase 13 family. GlgB subfamily. As to quaternary structure, monomer.

It carries out the reaction Transfers a segment of a (1-&gt;4)-alpha-D-glucan chain to a primary hydroxy group in a similar glucan chain.. The protein operates within glycan biosynthesis; glycogen biosynthesis. Functionally, catalyzes the formation of the alpha-1,6-glucosidic linkages in glycogen by scission of a 1,4-alpha-linked oligosaccharide from growing alpha-1,4-glucan chains and the subsequent attachment of the oligosaccharide to the alpha-1,6 position. In Bacillus cereus (strain AH187), this protein is 1,4-alpha-glucan branching enzyme GlgB.